The sequence spans 579 residues: UPF0324 membrane protein DVU_0943 (579 aa).

10 helical membrane-spanning segments follow: residues 26 to 45 (YWAI…LFLA), 193 to 215 (AFNI…AIGM), 225 to 243 (FLVG…QMMG), 250 to 272 (YWGI…TVGT), 305 to 327 (IGIP…TFIF), 369 to 391 (LTLS…PAFI), 430 to 452 (AATI…AVYW), 473 to 495 (FPKF…GSLG), 515 to 533 (LRGW…ATNF), and 546 to 568 (LILY…YIMF).

This sequence belongs to the UPF0324 family.

It localises to the cell membrane. This chain is UPF0324 membrane protein DVU_0943, found in Nitratidesulfovibrio vulgaris (strain ATCC 29579 / DSM 644 / CCUG 34227 / NCIMB 8303 / VKM B-1760 / Hildenborough) (Desulfovibrio vulgaris).